We begin with the raw amino-acid sequence, 367 residues long: Zinc transport system membrane protein TroD (367 aa).

Helical transmembrane passes span 5–25, 28–48, 56–76, 87–107, 140–160, 170–190, 201–221, 224–244, and 251–271; these read VVLI…FLVL, ISLM…LGYF, FVPF…AELL, AVGL…SLYA, SLVQ…LFFK, VLAT…MLAV, VGAV…LLLT, LLLM…SGLF, and GSIA…VYLF.

It belongs to the ABC-3 integral membrane protein family.

It is found in the cell membrane. Functionally, part of an ATP-driven transport system TroABCD for zinc. This chain is Zinc transport system membrane protein TroD (troD), found in Treponema pallidum (strain Nichols).